The sequence spans 141 residues: MNARGLGSELKDSIPVTELSASGPFESHDLLRKGFSCVKNELLPSHPLELSEKNFQLNQDKMNFSTLRNIQGLFAPLKLQMEFKAVQQVQRLPFLSSSNLSLDVLRGNDETIGFEDILNDPSQSEVMGEPHLMVEYKLGLL.

A Glycyl lysine isopeptide (Lys-Gly) (interchain with G-Cter in SUMO2) cross-link involves residue Lys39. Residues 68–72 (RNIQG) carry the High-affinity association with the preproteasome motif.

It belongs to the POMP/UMP1 family. Constituent of preproteasomes, but not of mature 20S proteasomes. Within the preproteasome, may directly interact with PSMB1/beta6, PSMB4/beta7, PSMB5/beta5, PSMB6/beta1 and PSMB9/beta1i. Interaction with PSMB8/beta5i has been observed in PubMed:10973495, but not in PubMed:10926487. Forms tetramers. Strongly expressed from the basal layer to the granular layer of healthy epidermis, whereas in KLICK patients there is a gradual decrease of expression toward the granular layer.

The protein localises to the cytoplasm. It is found in the cytosol. Its subcellular location is the nucleus. It localises to the microsome membrane. Its function is as follows. Molecular chaperone essential for the assembly of standard proteasomes and immunoproteasomes. Degraded after completion of proteasome maturation. Mediates the association of 20S preproteasome with the endoplasmic reticulum. This is Proteasome maturation protein from Homo sapiens (Human).